A 220-amino-acid polypeptide reads, in one-letter code: Imidazoleglycerol-phosphate dehydratase (220 aa).

Substrate contacts are provided by residues E14, 64-72 (HMIHALAKH), 90-94 (HHTTE), R116, and R138. Residues H64, H90, H91, and E94 each coordinate Mn(2+). Mn(2+)-binding residues include H162, H186, H187, and E190. Residues 186–194 (HHRSESAFK) and 214–216 (STK) each bind substrate.

The protein belongs to the imidazoleglycerol-phosphate dehydratase family. Mn(2+) serves as cofactor.

The catalysed reaction is D-erythro-1-(imidazol-4-yl)glycerol 3-phosphate = 3-(imidazol-4-yl)-2-oxopropyl phosphate + H2O. It participates in amino-acid biosynthesis; L-histidine biosynthesis; L-histidine from 5-phospho-alpha-D-ribose 1-diphosphate: step 6/9. The protein is Imidazoleglycerol-phosphate dehydratase of Saccharomyces cerevisiae (strain ATCC 204508 / S288c) (Baker's yeast).